The chain runs to 247 residues: DNA polymerase epsilon subunit D (247 aa).

Positions 128–247 (KKHKADKKVP…EGQNSSDDDS (120 aa)) are disordered. A compositionally biased stretch (basic and acidic residues) spans 150 to 159 (RLKDNDEQII). 3 stretches are compositionally biased toward acidic residues: residues 165 to 188 (ADME…NDED), 196 to 215 (EEEE…EVEE), and 224 to 247 (EEDE…DDDS).

In terms of assembly, heterotetramer. Consists of four subunits: POL2, DPB2, DPB3 and DPB4.

It localises to the nucleus. As accessory component of the DNA polymerase epsilon (DNA polymerase II) participates in chromosomal DNA replication. This Debaryomyces hansenii (strain ATCC 36239 / CBS 767 / BCRC 21394 / JCM 1990 / NBRC 0083 / IGC 2968) (Yeast) protein is DNA polymerase epsilon subunit D (DPB4).